Reading from the N-terminus, the 202-residue chain is Imidazoleglycerol-phosphate dehydratase (202 aa).

The protein belongs to the imidazoleglycerol-phosphate dehydratase family.

The protein resides in the cytoplasm. The enzyme catalyses D-erythro-1-(imidazol-4-yl)glycerol 3-phosphate = 3-(imidazol-4-yl)-2-oxopropyl phosphate + H2O. It participates in amino-acid biosynthesis; L-histidine biosynthesis; L-histidine from 5-phospho-alpha-D-ribose 1-diphosphate: step 6/9. The protein is Imidazoleglycerol-phosphate dehydratase of Chelativorans sp. (strain BNC1).